The sequence spans 237 residues: Phosphatidylserine decarboxylase proenzyme (237 aa).

Ser-206 functions as the Schiff-base intermediate with substrate; via pyruvic acid in the catalytic mechanism. The residue at position 206 (Ser-206) is a Pyruvic acid (Ser); by autocatalysis.

The protein belongs to the phosphatidylserine decarboxylase family. PSD-A subfamily. As to quaternary structure, heterodimer of a large membrane-associated beta subunit and a small pyruvoyl-containing alpha subunit. The cofactor is pyruvate. Is synthesized initially as an inactive proenzyme. Formation of the active enzyme involves a self-maturation process in which the active site pyruvoyl group is generated from an internal serine residue via an autocatalytic post-translational modification. Two non-identical subunits are generated from the proenzyme in this reaction, and the pyruvate is formed at the N-terminus of the alpha chain, which is derived from the carboxyl end of the proenzyme. The post-translation cleavage follows an unusual pathway, termed non-hydrolytic serinolysis, in which the side chain hydroxyl group of the serine supplies its oxygen atom to form the C-terminus of the beta chain, while the remainder of the serine residue undergoes an oxidative deamination to produce ammonia and the pyruvoyl prosthetic group on the alpha chain.

It is found in the cell membrane. The catalysed reaction is a 1,2-diacyl-sn-glycero-3-phospho-L-serine + H(+) = a 1,2-diacyl-sn-glycero-3-phosphoethanolamine + CO2. The protein operates within phospholipid metabolism; phosphatidylethanolamine biosynthesis; phosphatidylethanolamine from CDP-diacylglycerol: step 2/2. In terms of biological role, catalyzes the formation of phosphatidylethanolamine (PtdEtn) from phosphatidylserine (PtdSer). The protein is Phosphatidylserine decarboxylase proenzyme of Rhodococcus opacus (strain B4).